The chain runs to 486 residues: O-methyltransferase gedA (486 aa).

S-adenosyl-L-methionine-binding positions include 298–299 (GG), Asp-321, 353–354 (SF), and Arg-369. The Proton acceptor role is filled by His-373.

This sequence belongs to the class I-like SAM-binding methyltransferase superfamily. Cation-independent O-methyltransferase family.

The catalysed reaction is emodin + S-adenosyl-L-methionine = questin + S-adenosyl-L-homocysteine + H(+). Its pathway is secondary metabolite biosynthesis. O-methyltransferase; part of the gene cluster that mediates the biosynthesis of geodin, an intermediate in the biosynthesis of other natural products. The pathway begins with the synthesis of atrochrysone thioester by the polyketide synthase (PKS) gedC. The atrochrysone carboxyl ACP thioesterase gedB then breaks the thioester bond and releases the atrochrysone carboxylic acid from gedC. The atrochrysone carboxylic acid is then converted to atrochrysone which is further transformed into emodinanthrone. The next step is performed by the emodinanthrone oxygenase gedH that catalyzes the oxidation of emodinanthrone to emodin. Emodin O-methyltransferase encoded probably by gedA then catalyzes methylation of the 8-hydroxy group of emodin to form questin. Ring cleavage of questin by questin oxidase gedK leads to desmethylsulochrin via several intermediates including questin epoxide. Another methylation step probably catalyzed by methyltransferase gedG leads to the formation of sulochrin which is further converted to dihydrogeodin by the sulochrin halogenase gedL. Finally, the dihydrogeodin oxidase gedJ catalyzes the stereospecific phenol oxidative coupling reaction converting dihydrogeodin to geodin. This chain is O-methyltransferase gedA, found in Aspergillus terreus (strain NIH 2624 / FGSC A1156).